Reading from the N-terminus, the 213-residue chain is Serine acetyltransferase (213 aa).

The protein belongs to the transferase hexapeptide repeat family.

The protein resides in the cytoplasm. It catalyses the reaction L-serine + acetyl-CoA = O-acetyl-L-serine + CoA. It functions in the pathway amino-acid biosynthesis; L-cysteine biosynthesis; L-cysteine from L-serine: step 1/2. The sequence is that of Serine acetyltransferase (cysE) from Staphylococcus aureus (strain COL).